The chain runs to 601 residues: MAMRTHYCGLVTEALMGQTVTLCGWVNRRRDHGGVIFIDVRDREGYVQVVCDPDRAATFAVAENLRNEFCVQVTGLVRARPEGTTNDQLKSGKIEVLCHELKVLNPSVTPPFLLDDDNLSETTRLTHRVLDLRRPAMQRNMMLRYKVTMETRKFLDANGFIDIETPMLGKSTPEGARDYLVPSRVHDGSFFALPQSPQLFKQLLMVAGYDRYYQIVKCFRDEDLRADRQPEFTQIDIETSFLAEEEIREMFEGMIRNVFRNAAGIDLPVFPTMTYGDAMFKYGSDKPDLRVKLEFTELTELMKRVEFKVFSNAATMQGGRVVALRVPGGGAEGGLSRGEIDAYQEFVKIYGAKGLAYIKVNDAAAGREGLQSPIVKNLDDASLAEIIARTGARNGDILFFGADKEKIVNDAIGALRVKIGHSAFGKKSGLFDDRWAPLWVVDFPMFEFDEEGQRWSAVHHPFTAPKDGHEDLMDTAPEKCIAKAYDMVLNGIEMGGGSVRIHREEVQSKVFRALKISAEDAQLKFGFLLDALQYGAPPHGGIAIGLDRLVMLMTGAESIRDVIAFPKTQRAQDLLTQAPSPVDEKQLRELHIRLRNVQQPA.

Glu174 serves as a coordination point for L-aspartate. The segment at 198-201 (QLFK) is aspartate. Arg220 provides a ligand contact to L-aspartate. Residues 220–222 (RDE) and Gln229 contribute to the ATP site. Position 459 (His459) interacts with L-aspartate. Glu493 provides a ligand contact to ATP. An L-aspartate-binding site is contributed by Arg500. 545-548 (GLDR) contacts ATP.

It belongs to the class-II aminoacyl-tRNA synthetase family. Type 1 subfamily. In terms of assembly, homodimer.

Its subcellular location is the cytoplasm. It carries out the reaction tRNA(Asx) + L-aspartate + ATP = L-aspartyl-tRNA(Asx) + AMP + diphosphate. In terms of biological role, aspartyl-tRNA synthetase with relaxed tRNA specificity since it is able to aspartylate not only its cognate tRNA(Asp) but also tRNA(Asn). Reaction proceeds in two steps: L-aspartate is first activated by ATP to form Asp-AMP and then transferred to the acceptor end of tRNA(Asp/Asn). This is Aspartate--tRNA(Asp/Asn) ligase from Variovorax paradoxus (strain S110).